The sequence spans 123 residues: UPF0231 protein plu3616 (123 aa).

Belongs to the UPF0231 family.

In Photorhabdus laumondii subsp. laumondii (strain DSM 15139 / CIP 105565 / TT01) (Photorhabdus luminescens subsp. laumondii), this protein is UPF0231 protein plu3616.